Consider the following 995-residue polypeptide: Epididymis-specific alpha-mannosidase (995 aa).

The first 21 residues, 1–21 (MGPHSWLPLFMQLALLGPQWA), serve as a signal peptide directing secretion. Positions 36, 38, and 151 each coordinate Zn(2+). Residue D151 is the Nucleophile of the active site. N285 carries an N-linked (GlcNAc...) asparagine glycan. A Zn(2+)-binding site is contributed by H411. 7 N-linked (GlcNAc...) asparagine glycosylation sites follow: N593, N625, N657, N733, N793, N875, and N977. The interval 956–977 (TEDGHHHRGSSRRPLPPLRGPN) is disordered.

Belongs to the glycosyl hydrolase 38 family. The cofactor is Zn(2+). Post-translationally, processed into a 27 kDa fragment localized on the equatorial segment and the apical rim of the head of mature sperm. As to expression, specific to the caput and corpus of the epididymis.

It localises to the secreted. The catalysed reaction is Hydrolysis of terminal, non-reducing alpha-D-mannose residues in alpha-D-mannosides.. In terms of biological role, can digest both p-nitro-phenyl-alpha-D-mannoside and high mannose oligosaccharide (Man(8)-GlcNAc(2)). May be involved in sperm maturation. Has a possible role in specific sperm-egg interaction since sperm surface mannosidase acts like a receptor for mannose-containing oligosaccharides located on the zona pellucida. This is Epididymis-specific alpha-mannosidase (MAN2B2) from Sus scrofa (Pig).